A 175-amino-acid chain; its full sequence is Cuticle protein 16.5, isoform B (175 aa).

A run of 19 repeats spans residues 17 to 20 (AAPA), 25 to 28 (AAPA), 31 to 34 (AAPA), 38 to 41 (AAPA), 44 to 47 (AAPA), 51 to 54 (AAPA), 57 to 60 (AAPA), 64 to 67 (AAPA), 70 to 73 (AAPA), 77 to 80 (AAPA), 83 to 86 (AAPA), 91 to 94 (AAPA), 99 to 102 (AAPA), 106 to 109 (AAPA), 134 to 137 (AAPA), 144 to 147 (AAPA), 151 to 154 (AAPA), 158 to 161 (AAPA), and 165 to 168 (AAPA).

Its function is as follows. Component of the cuticle of migratory locust which contains more than 100 different structural proteins. In Locusta migratoria (Migratory locust), this protein is Cuticle protein 16.5, isoform B.